The primary structure comprises 154 residues: Ecotin-like protein 2 (154 aa).

The protein belongs to the protease inhibitor I11 (ecotin) family.

This chain is Ecotin-like protein 2, found in Trypanosoma brucei brucei (strain 927/4 GUTat10.1).